The chain runs to 283 residues: Succinate dehydrogenase [ubiquinone] iron-sulfur subunit, mitochondrial (283 aa).

In terms of domain architecture, 2Fe-2S ferredoxin-type spans 66 to 145 (KKPTLQTYSI…PVKIYPLPHM (80 aa)). Residues cysteine 105, cysteine 110, cysteine 113, and cysteine 125 each coordinate [2Fe-2S] cluster. One can recognise a 4Fe-4S ferredoxin-type domain in the interval 186-216 (DRKKLDGMYECILCACCSTSCPSYWWNQDEY). Positions 196, 199, and 202 each coordinate [4Fe-4S] cluster. Residue cysteine 206 participates in [3Fe-4S] cluster binding. Residue tryptophan 211 participates in a ubiquinone binding. [3Fe-4S] cluster contacts are provided by cysteine 253 and cysteine 259. Cysteine 263 contacts [4Fe-4S] cluster.

It belongs to the succinate dehydrogenase/fumarate reductase iron-sulfur protein family. In terms of assembly, component of complex II composed of four subunits: a flavoprotein (FP), an iron-sulfur protein (IP), and a cytochrome b composed of a large and a small subunit. [2Fe-2S] cluster serves as cofactor. [3Fe-4S] cluster is required as a cofactor. Requires [4Fe-4S] cluster as cofactor.

It localises to the mitochondrion inner membrane. The catalysed reaction is a quinone + succinate = fumarate + a quinol. The protein operates within carbohydrate metabolism; tricarboxylic acid cycle; fumarate from succinate (eukaryal route): step 1/1. In terms of biological role, iron-sulfur protein (IP) subunit of succinate dehydrogenase (SDH) that is involved in complex II of the mitochondrial electron transport chain and is responsible for transferring electrons from succinate to ubiquinone (coenzyme Q). In Uromyces fabae (Rust fungus), this protein is Succinate dehydrogenase [ubiquinone] iron-sulfur subunit, mitochondrial (SDH2).